Consider the following 147-residue polypeptide: Hemoglobin subunit beta (147 aa).

In terms of domain architecture, Globin spans 3–147; that stretch reads EWTDDERAII…VVSALGRQYH (145 aa). Residues H64 and H93 each coordinate heme b.

The protein belongs to the globin family. In terms of assembly, heterotetramer of two alpha chains and two beta chains. Red blood cells.

In terms of biological role, involved in oxygen transport from gills to the various peripheral tissues. The chain is Hemoglobin subunit beta (hbb) from Merlangius merlangus (Whiting).